The primary structure comprises 186 residues: Ribosome-recycling factor (186 aa).

It belongs to the RRF family.

The protein resides in the cytoplasm. Responsible for the release of ribosomes from messenger RNA at the termination of protein biosynthesis. May increase the efficiency of translation by recycling ribosomes from one round of translation to another. The chain is Ribosome-recycling factor from Phocaeicola vulgatus (strain ATCC 8482 / DSM 1447 / JCM 5826 / CCUG 4940 / NBRC 14291 / NCTC 11154) (Bacteroides vulgatus).